A 40-amino-acid chain; its full sequence is Photosystem II reaction center protein J (40 aa).

The helical transmembrane segment at 8–28 (IPLWLIGTVAGILIIGLLGVF) threads the bilayer.

Belongs to the PsbJ family. PSII is composed of 1 copy each of membrane proteins PsbA, PsbB, PsbC, PsbD, PsbE, PsbF, PsbH, PsbI, PsbJ, PsbK, PsbL, PsbM, PsbT, PsbX, PsbY, PsbZ, Psb30/Ycf12, at least 3 peripheral proteins of the oxygen-evolving complex and a large number of cofactors. It forms dimeric complexes.

The protein localises to the plastid. It localises to the chloroplast thylakoid membrane. Its function is as follows. One of the components of the core complex of photosystem II (PSII). PSII is a light-driven water:plastoquinone oxidoreductase that uses light energy to abstract electrons from H(2)O, generating O(2) and a proton gradient subsequently used for ATP formation. It consists of a core antenna complex that captures photons, and an electron transfer chain that converts photonic excitation into a charge separation. This is Photosystem II reaction center protein J from Nandina domestica (Heavenly bamboo).